Consider the following 614-residue polypeptide: DNA ligase (614 aa).

Residues 29–33 (DQDYD) and 73–74 (SI) each bind NAD(+). Residue Lys-111 is the N6-AMP-lysine intermediate of the active site. Arg-127, Glu-158, and Lys-270 together coordinate NAD(+). Residues Cys-358, Cys-361, Cys-374, and Cys-380 each coordinate Zn(2+). In terms of domain architecture, BRCT spans 538–614 (TLTHELFDKK…MTETDYLSKI (77 aa)).

The protein belongs to the NAD-dependent DNA ligase family. LigA subfamily. The cofactor is Mg(2+). Requires Mn(2+) as cofactor.

It carries out the reaction NAD(+) + (deoxyribonucleotide)n-3'-hydroxyl + 5'-phospho-(deoxyribonucleotide)m = (deoxyribonucleotide)n+m + AMP + beta-nicotinamide D-nucleotide.. DNA ligase that catalyzes the formation of phosphodiester linkages between 5'-phosphoryl and 3'-hydroxyl groups in double-stranded DNA using NAD as a coenzyme and as the energy source for the reaction. It is essential for DNA replication and repair of damaged DNA. This Ruthia magnifica subsp. Calyptogena magnifica protein is DNA ligase.